The chain runs to 240 residues: Transcriptional regulatory protein ResD (240 aa).

The 114-residue stretch at 8 to 121 (KILVVDDEAR…EVVLRVKALL (114 aa)) folds into the Response regulatory domain. Asp57 carries the 4-aspartylphosphate modification. A DNA-binding region (ompR/PhoB-type) is located at residues 137-237 (KNVLVFSHLS…VWGVGYKFEV (101 aa)).

As to quaternary structure, interacts with the RNA polymerase core. Phosphorylated by ResE.

The protein resides in the cytoplasm. Its function is as follows. Member of the two-component regulatory system ResD/ResE. Required for the expression of resA, ctaA, qcrABC and fnr; activation role in global regulation of aerobic and anaerobic respiration. This is Transcriptional regulatory protein ResD (resD) from Bacillus subtilis (strain 168).